A 696-amino-acid chain; its full sequence is MSVFVMEIGTEELPARFLSGLEQEIASRFEAALAAANVEFGTLNVQSTPRRLALTIENIDAVQREAEEVVSGPPVRIAFDAQGRPTKAAEGFARTQGAELDELFTLTTDKGEYLAVRKKTGGRPVQEILSEVAPEIIAALPFPKKMKWGSGDFTFGRPLRWVLALFDSEVVSFTVAGIVSGNETCGHRVHGPGPFEVSGADAYAGTVRDKCHVTLCAADRRRVTVEGGDALAAQAGGRILWKDSLLDEVQGLCEHPVPCLGDFDPSFLELPAEVLLTSMESHQKSFGVAAADGSLMPHFLTVLNMTPQNSALVKKGWERVLRARLEDARFFWKADLASDFDSWLAKLDNVIFLAPLGSMGDKTRRLERLCRWLAAAVAPDIQEQAARAGRLSKADLVSEMVYEFDSLQGIMGGIYARRKGEDEIVAQAVSEQYLPAGPESPVPDSLCGALLSIADKADTLAGCFGLSMIPTGAADPYALRRCALGIARIMLEKGLRFDVRELFRYAQEGYGERQWKLKPEQAAEKLHEFFVLRLKNLFVSQGHETLLVEAALHAGADDVWAAGARLEALDRFSKSAEFGQAVLTFKRAANIIRKQGQEEDGGLDGCYDASLFEDEAEKALAGALEDIAPDFEARWAADDYHALFGLLGVLRPAVDAFFDSVMVMCEDPHIRRNRLNLLQSLVQRLGRLADFGALQM.

It belongs to the class-II aminoacyl-tRNA synthetase family. As to quaternary structure, tetramer of two alpha and two beta subunits.

The protein localises to the cytoplasm. The enzyme catalyses tRNA(Gly) + glycine + ATP = glycyl-tRNA(Gly) + AMP + diphosphate. The polypeptide is Glycine--tRNA ligase beta subunit (Oleidesulfovibrio alaskensis (strain ATCC BAA-1058 / DSM 17464 / G20) (Desulfovibrio alaskensis)).